The chain runs to 70 residues: Gene 4.3 protein (70 aa).

The sequence is that of Gene 4.3 protein (4.3) from Escherichia coli (Bacteriophage T3).